Here is a 386-residue protein sequence, read N- to C-terminus: Demethylsterigmatocystin 6-O-methyltransferase (386 aa).

Substrate is bound at residue Phe-137–Phe-150. Residues Met-177–Leu-197 form a substrate binding region. Residues Gly-228 to Gly-229, Asp-253, Asn-273 to Phe-274, and Arg-289 each bind S-adenosyl-L-methionine. Catalysis depends on His-293, which acts as the Proton acceptor.

The protein belongs to the class I-like SAM-binding methyltransferase superfamily. Cation-independent O-methyltransferase family. COMT subfamily.

The enzyme catalyses 6-demethylsterigmatocystin + S-adenosyl-L-methionine = sterigmatocystin + S-adenosyl-L-homocysteine + H(+). It participates in mycotoxin biosynthesis; aflatoxin biosynthesis. Demethylsterigmatocystin 6-O-methyltransferase; part of the gene cluster that mediates the biosynthesis of aflatoxins, a group of polyketide-derived furanocoumarins, and part of the most toxic and carcinogenic compounds among the known mycotoxins. The four major aflatoxins produced by A.parasiticus are aflatoxin B1 (AFB1), aflatoxin B2 (AFB2), aflatoxin G1 (AFG1) and aflatoxin G2 (AFG2). Within the aflatoxin pathway, the methyltransferase aflO then catalyzes the modification of demethylsterigmatocystin (DMST) to sterigmatocystin (ST), and of dihydrodemethylsterigmatocystin (DMDHST) to dihydrosterigmatocystin (DHST). The biosynthesis of aflatoxins begins with the norsolorinic acid synthase aflC that combines a hexanoyl starter unit produced by the fatty acid synthase aflA/aflB and 7 malonyl-CoA extender units to synthesize the precursor NOR. The second step is the conversion of NOR to averantin and requires the norsolorinic acid ketoreductase aflD, which catalyzes the dehydration of norsolorinic acid to form (1'S)-averantin. The norsolorinic acid reductases aflE and aflF may also play a role in the conversion of NOR to AVN. The cytochrome P450 monooxygenase aflG then catalyzes the hydroxylation of AVN to 5'hydroxyaverantin (HAVN). The next step is performed by the 5'-hydroxyaverantin dehydrogenase aflH that transforms HAVN to 5'-oxoaverantin (OAVN) which is further converted to averufin (AVF) by aflK that plays a dual role in the pathway, as a 5'-oxoaverantin cyclase that mediates conversion of 5'-oxoaverantin, as well as a versicolorin B synthase in a later step in the pathway. The averufin oxidase aflI catalyzes the conversion of AVF to versiconal hemiacetal acetate (VHA). VHA is then the substrate for the versiconal hemiacetal acetate esterase aflJ to yield versiconal (VAL). Versicolorin B synthase aflK then converts VAL to versicolorin B (VERB) by closing the bisfuran ring of aflatoxin which is required for DNA-binding, thus giving to aflatoxin its activity as a mutagen. Then, the activity of the versicolorin B desaturase aflL leads to versicolorin A (VERA). A branch point starts from VERB since it can also be converted to dihydrodemethylsterigmatocystin (DMDHST), probably also by aflL, VERA being a precursor for aflatoxins B1 and G1, and DMDHST for aflatoxins B2 and G2. Next, the versicolorin reductase aflM and the cytochrome P450 monooxygenase aflN are involved in conversion of VERA to demethylsterigmatocystin (DMST). AflX and aflY seem also involved in this step, through probable aflX-mediated epoxide ring-opening step following versicolorin A oxidation and aflY-mediated Baeyer-Villiger oxidation required for the formation of the xanthone ring. The methyltransferase aflO then leads to the modification of DMST to sterigmatocystin (ST), and of DMDHST to dihydrosterigmatocystin (DHST). Both ST and DHST are then substrates of the O-methyltransferase aflP to yield O-methylsterigmatocystin (OMST) and dihydro-O-methylsterigmatocystin (DHOMST), respectively. Finally OMST is converted to aflatoxins B1 and G1, and DHOMST to aflatoxins B2 and G2, via the action of several enzymes including O-methylsterigmatocystin oxidoreductase aflQ, the cytochrome P450 monooxygenase aflU, but also the NADH-dependent flavin oxidoreductase nadA which is specifically required for the synthesis of AFG1. The chain is Demethylsterigmatocystin 6-O-methyltransferase from Aspergillus parasiticus (strain ATCC 56775 / NRRL 5862 / SRRC 143 / SU-1).